The chain runs to 518 residues: Bifunctional purine biosynthesis protein PurH (518 aa).

Residues 1-146 enclose the MGS-like domain; the sequence is MSPIALLSVS…KNHQDVLVVT (146 aa).

It belongs to the PurH family.

The enzyme catalyses (6R)-10-formyltetrahydrofolate + 5-amino-1-(5-phospho-beta-D-ribosyl)imidazole-4-carboxamide = 5-formamido-1-(5-phospho-D-ribosyl)imidazole-4-carboxamide + (6S)-5,6,7,8-tetrahydrofolate. It catalyses the reaction IMP + H2O = 5-formamido-1-(5-phospho-D-ribosyl)imidazole-4-carboxamide. The protein operates within purine metabolism; IMP biosynthesis via de novo pathway; 5-formamido-1-(5-phospho-D-ribosyl)imidazole-4-carboxamide from 5-amino-1-(5-phospho-D-ribosyl)imidazole-4-carboxamide (10-formyl THF route): step 1/1. Its pathway is purine metabolism; IMP biosynthesis via de novo pathway; IMP from 5-formamido-1-(5-phospho-D-ribosyl)imidazole-4-carboxamide: step 1/1. The sequence is that of Bifunctional purine biosynthesis protein PurH from Prochlorococcus marinus (strain NATL1A).